The chain runs to 620 residues: Protein phosphatase 2C-like domain-containing protein 1 (620 aa).

Residues 173 to 611 (GIAICSNNNS…DSITVMVMFL (439 aa)) enclose the PPM-type phosphatase domain.

It belongs to the PP2C family.

The chain is Protein phosphatase 2C-like domain-containing protein 1 (Pp2d1) from Mus musculus (Mouse).